The sequence spans 465 residues: MDQPRKLHIKSFGCQMNVYDAQRMVDALAPEGFVETQSADDADLVILNTCHIREKAAEKVYSELGKLRLLKQDAASHGRRFEIAVAGCVAQAEGAEIIRRQPAVDVVVGPQSYHHLPELLEKARRDGRALETEFPIEDKFGVLPPPRPDAIRARGVSAFVTVQEGCDKFCSFCVVPYTRGAEMSRPVAKILDDVKRLIDNGVREITLIGQNVNAYHGEGPDDRPWTLGALLRHLASVPGVARLRYSTSHPLDVDDELIAAHRELPGLMPFVHLPVQSGSDAILAAMNRRHSADDYRRVIDRFRQADPSIAFSSDFIVGFPGETDRDFEATLALVTQIGYAGAYSFKYSPRPGTPAAELQEMVAPAVMDQRLEQLQGLIDSQQAAFNRASIGTTVDVLFERAARHPGQIVGRTAYLQPAHVMAADDIVGQVLPVTIHSLERYSLIGELVKPQPARPPKPLPVTTGA.

Positions 5-125 (RKLHIKSFGC…LPELLEKARR (121 aa)) constitute an MTTase N-terminal domain. [4Fe-4S] cluster-binding residues include Cys-14, Cys-50, Cys-88, Cys-166, Cys-170, and Cys-173. A Radical SAM core domain is found at 152 to 382 (RARGVSAFVT…QLQGLIDSQQ (231 aa)). The TRAM domain occupies 387–449 (RASIGTTVDV…RYSLIGELVK (63 aa)).

Belongs to the methylthiotransferase family. MiaB subfamily. In terms of assembly, monomer. It depends on [4Fe-4S] cluster as a cofactor.

The protein localises to the cytoplasm. The enzyme catalyses N(6)-dimethylallyladenosine(37) in tRNA + (sulfur carrier)-SH + AH2 + 2 S-adenosyl-L-methionine = 2-methylsulfanyl-N(6)-dimethylallyladenosine(37) in tRNA + (sulfur carrier)-H + 5'-deoxyadenosine + L-methionine + A + S-adenosyl-L-homocysteine + 2 H(+). In terms of biological role, catalyzes the methylthiolation of N6-(dimethylallyl)adenosine (i(6)A), leading to the formation of 2-methylthio-N6-(dimethylallyl)adenosine (ms(2)i(6)A) at position 37 in tRNAs that read codons beginning with uridine. This chain is tRNA-2-methylthio-N(6)-dimethylallyladenosine synthase, found in Rhodopseudomonas palustris (strain BisA53).